A 693-amino-acid polypeptide reads, in one-letter code: Histone-lysine N-methyltransferase, H3 lysine-9 specific SUVH7 (693 aa).

2 disordered regions span residues 64–99 (WYDG…PPEM) and 111–175 (DSSN…AETE). The segment at residues 129 to 141 (KRGRGRPKGSKNS) is a DNA-binding region (a.T hook). The YDG domain occupies 227 to 373 (GAVPGIHVGD…FKEFRFKLVR (147 aa)). In terms of domain architecture, Pre-SET spans 454-516 (QSLGCQNCRH…HCPTRLVQTG (63 aa)). Positions 458, 461, 466, 471, 473, 498, 502, 504, and 508 each coordinate Zn(2+). In terms of domain architecture, SET spans 519 to 660 (LHLEVFKTRN…PMTELTYDYG (142 aa)). Residues 529-531 (CGW), Asp-562, Tyr-564, Arg-614, and 617-618 (NH) each bind S-adenosyl-L-methionine. 4 residues coordinate Zn(2+): Cys-620, Cys-681, Cys-683, and Cys-688. The Post-SET domain maps to 677–693 (GKKTCLCGSVKCRGSFT).

Belongs to the class V-like SAM-binding methyltransferase superfamily. Histone-lysine methyltransferase family. Suvar3-9 subfamily.

Its subcellular location is the nucleus. It is found in the chromosome. It localises to the centromere. It catalyses the reaction N(6)-methyl-L-lysyl(9)-[histone H3] + S-adenosyl-L-methionine = N(6),N(6)-dimethyl-L-lysyl(9)-[histone H3] + S-adenosyl-L-homocysteine + H(+). The catalysed reaction is L-lysyl(9)-[histone H3] + S-adenosyl-L-methionine = N(6)-methyl-L-lysyl(9)-[histone H3] + S-adenosyl-L-homocysteine + H(+). Histone methyltransferase. Methylates 'Lys-9' of histone H3. H3 'Lys-9' methylation represents a specific tag for epigenetic transcriptional repression. This chain is Histone-lysine N-methyltransferase, H3 lysine-9 specific SUVH7 (SUVH7), found in Arabidopsis thaliana (Mouse-ear cress).